A 168-amino-acid chain; its full sequence is Quinol oxidase subunit 2 (168 aa).

Residues 9 to 31 traverse the membrane as a helical segment; the sequence is EVWFIVMLVLVLIFFSWNVYYLS.

Belongs to the cytochrome c oxidase subunit 2 family.

Its subcellular location is the cell membrane. It carries out the reaction 2 a quinol + O2 = 2 a quinone + 2 H2O. In terms of biological role, the terminal oxidase is the component of the respiratory chain that catalyzes the reduction of oxygen to water. Subunits 1-3 form the functional core of the enzyme complex. Its function is as follows. Subunit 2 transfers the electrons from caldariella quinol to the bimetallic center of the catalytic subunit 1 that is formed by heme A3 and Cu(B). The chain is Quinol oxidase subunit 2 (soxA) from Sulfolobus acidocaldarius (strain ATCC 33909 / DSM 639 / JCM 8929 / NBRC 15157 / NCIMB 11770).